We begin with the raw amino-acid sequence, 431 residues long: Serine--tRNA ligase (431 aa).

235 to 237 (TSE) contributes to the L-serine binding site. 266 to 268 (RSE) is a binding site for ATP. Glutamate 289 is a binding site for L-serine. 353–356 (EISS) contacts ATP. L-serine is bound at residue serine 388.

Belongs to the class-II aminoacyl-tRNA synthetase family. Type-1 seryl-tRNA synthetase subfamily. As to quaternary structure, homodimer. The tRNA molecule binds across the dimer.

It is found in the cytoplasm. It carries out the reaction tRNA(Ser) + L-serine + ATP = L-seryl-tRNA(Ser) + AMP + diphosphate + H(+). The enzyme catalyses tRNA(Sec) + L-serine + ATP = L-seryl-tRNA(Sec) + AMP + diphosphate + H(+). It participates in aminoacyl-tRNA biosynthesis; selenocysteinyl-tRNA(Sec) biosynthesis; L-seryl-tRNA(Sec) from L-serine and tRNA(Sec): step 1/1. Catalyzes the attachment of serine to tRNA(Ser). Is also able to aminoacylate tRNA(Sec) with serine, to form the misacylated tRNA L-seryl-tRNA(Sec), which will be further converted into selenocysteinyl-tRNA(Sec). The polypeptide is Serine--tRNA ligase (Paraburkholderia phytofirmans (strain DSM 17436 / LMG 22146 / PsJN) (Burkholderia phytofirmans)).